Here is a 120-residue protein sequence, read N- to C-terminus: Guanidine hydrolase-activating protein A (120 aa).

The Ni(2+) site is built by His-2, Glu-3, and Glu-41. Positions 74, 77, 91, and 94 each coordinate Zn(2+).

It belongs to the HypA/HybF family.

In terms of biological role, involved in the maturation of the nickel-dependent guanidine hydrolase GdmH. Required for nickel insertion into the metal center of GdmH. Seems to be required only for GdmH activation and not for activity. This chain is Guanidine hydrolase-activating protein A, found in Synechocystis sp. (strain ATCC 27184 / PCC 6803 / Kazusa).